The sequence spans 262 residues: VPS74-like protein DDB_G0288371 (262 aa).

This sequence belongs to the GOLPH3/VPS74 family.

It localises to the golgi apparatus. The protein resides in the golgi stack membrane. Phosphatidylinositol-4-phosphate-binding protein that links Golgi membranes to the cytoskeleton and may participate in the tensile force required for vesicle budding from the Golgi. Thereby, may play a role in Golgi membrane trafficking. May also bind to the coatomer to regulate Golgi membrane trafficking. May play a role in anterograde transport from the Golgi to the plasma membrane and regulate secretion. May be involved in vacuolar protein sorting. This Dictyostelium discoideum (Social amoeba) protein is VPS74-like protein DDB_G0288371.